Reading from the N-terminus, the 382-residue chain is Lipid-A-disaccharide synthase (382 aa).

The protein belongs to the LpxB family.

The enzyme catalyses 2-N,3-O-bis[(3R)-3-hydroxytetradecanoyl]-alpha-D-glucosaminyl 1-phosphate + UDP-2-N,3-O-bis[(3R)-3-hydroxytetradecanoyl]-alpha-D-glucosamine = lipid A disaccharide (E. coli) + UDP + H(+). It catalyses the reaction a lipid X + a UDP-2-N,3-O-bis[(3R)-3-hydroxyacyl]-alpha-D-glucosamine = a lipid A disaccharide + UDP + H(+). The protein operates within glycolipid biosynthesis; lipid IV(A) biosynthesis; lipid IV(A) from (3R)-3-hydroxytetradecanoyl-[acyl-carrier-protein] and UDP-N-acetyl-alpha-D-glucosamine: step 5/6. Condensation of UDP-2,3-diacylglucosamine and 2,3-diacylglucosamine-1-phosphate to form lipid A disaccharide, a precursor of lipid A, a phosphorylated glycolipid that anchors the lipopolysaccharide to the outer membrane of the cell. The sequence is that of Lipid-A-disaccharide synthase from Escherichia coli O127:H6 (strain E2348/69 / EPEC).